The following is a 55-amino-acid chain: Large ribosomal subunit protein bL33 (55 aa).

It belongs to the bacterial ribosomal protein bL33 family.

This Chelativorans sp. (strain BNC1) protein is Large ribosomal subunit protein bL33.